The sequence spans 231 residues: uncharacterized protein (231 aa).

The first 17 residues, 1–17 (MFGKILTTSLLIAMTFA), serve as a signal peptide directing secretion. The disordered stretch occupies residues 197–231 (KARKQQKNEGDDEETEDEQKIGSAIDGWVERQAKL).

This is an uncharacterized protein from Caenorhabditis elegans.